The sequence spans 276 residues: HTH-type transcriptional activator RhaR (276 aa).

In terms of domain architecture, HTH araC/xylS-type spans 174-272; the sequence is ESLFSALNQS…SCTPTEYRSR (99 aa). 2 consecutive DNA-binding regions (H-T-H motif) follow at residues 191–212 and 239–262; these read ADFC…KQQT and VANI…GKTF.

In terms of assembly, binds DNA as a dimer.

It localises to the cytoplasm. Activates expression of the rhaSR operon in response to L-rhamnose. This chain is HTH-type transcriptional activator RhaR, found in Mannheimia succiniciproducens (strain KCTC 0769BP / MBEL55E).